The following is a 419-amino-acid chain: Ubiquitin-like modifier-activating enzyme 5 (419 aa).

The segment at 18-47 (NRLGNVKKDHPLESSSNSKPTHQPKSPAPY) is disordered. Residues 30–41 (ESSSNSKPTHQP) are compositionally biased toward polar residues. ATP-binding residues include Gly94, Asp115, Lys138, Asn161, and Asn194. The Zn(2+) site is built by Cys236 and Cys239. Residue Cys260 is the Glycyl thioester intermediate of the active site. Zn(2+) contacts are provided by Cys313 and Cys318.

The protein belongs to the ubiquitin-activating E1 family. UBA5 subfamily. Interacts with ufc-1. In terms of tissue distribution, expressed in the intestine.

Its function is as follows. E1-like enzyme which activates ufm-1. Required for interaction between ufm-1 and ufc-1. The protein is Ubiquitin-like modifier-activating enzyme 5 of Caenorhabditis elegans.